We begin with the raw amino-acid sequence, 146 residues long: Large ribosomal subunit protein uL15 (146 aa).

The tract at residues 1 to 56 is disordered; the sequence is MGLRLNELSPGVGAKKTAQRRGRGIGSGLGKTGGRGVKGQKSRSGSSVRSGFEGGQ. Over residues 24–37 the composition is skewed to gly residues; the sequence is GIGSGLGKTGGRGV.

It belongs to the universal ribosomal protein uL15 family. As to quaternary structure, part of the 50S ribosomal subunit.

Functionally, binds to the 23S rRNA. The polypeptide is Large ribosomal subunit protein uL15 (Psychrobacter arcticus (strain DSM 17307 / VKM B-2377 / 273-4)).